The following is a 100-amino-acid chain: Putative antiporter subunit mnhF2 (100 aa).

The next 3 membrane-spanning stretches (helical) occupy residues 6-26, 38-58, and 62-82; these read TNFF…IGLF, VVAF…VSVI, and VSFL…SVSI.

Belongs to the CPA3 antiporters (TC 2.A.63) subunit F family. In terms of assembly, may form a heterooligomeric complex that consists of seven subunits: mnhA2, mnhB2, mnhC2, mnhD2, mnhE2, mnhF2 and mnhG2.

It is found in the cell membrane. The polypeptide is Putative antiporter subunit mnhF2 (mnhF2) (Staphylococcus haemolyticus (strain JCSC1435)).